The following is a 1288-amino-acid chain: SH3 domain and tetratricopeptide repeat-containing protein 2 (1288 aa).

SH3 domains lie at 176–240 and 268–331; these read EGHF…PLPL and IGRG…PDSY. Residues 386-395 are compositionally biased toward polar residues; sequence NPPNDLSASQ. 2 disordered regions span residues 386–405 and 410–444; these read NPPN…VRPG and EHQA…LPEP. 8 TPR repeats span residues 528-561, 757-790, 836-869, 1001-1037, 1084-1118, 1119-1152, 1166-1199, and 1210-1244; these read ARLC…LNGA, RALC…GQLL, GVIY…AQEV, GRLL…FIDL, LKLY…LARR, LKAV…ATLA, LVAF…CPPW, and AKVY…AVLL.

As to expression, strongly expressed in brain and spinal cord. Expressed at equal level in spinal cord and sciatic nerve. Weakly expressed in striated muscle.

The polypeptide is SH3 domain and tetratricopeptide repeat-containing protein 2 (SH3TC2) (Homo sapiens (Human)).